Consider the following 278-residue polypeptide: Glucosamine-6-phosphate deaminase (278 aa).

The Proton acceptor; for enolization step role is filled by aspartate 72. The active-site For ring-opening step is the aspartate 141. Catalysis depends on histidine 143, which acts as the Proton acceptor; for ring-opening step. Catalysis depends on glutamate 148, which acts as the For ring-opening step.

This sequence belongs to the glucosamine/galactosamine-6-phosphate isomerase family. As to quaternary structure, homohexamer.

Its subcellular location is the cytoplasm. The enzyme catalyses alpha-D-glucosamine 6-phosphate + H2O = beta-D-fructose 6-phosphate + NH4(+). Its pathway is nucleotide-sugar biosynthesis; UDP-N-acetyl-alpha-D-glucosamine biosynthesis; alpha-D-glucosamine 6-phosphate from D-fructose 6-phosphate: step 1/1. Catalyzes the reversible conversion of alpha-D-glucosamine 6-phosphate (GlcN-6P) into beta-D-fructose 6-phosphate (Fru-6P) and ammonium ion, a regulatory reaction step in de novo uridine diphosphate-N-acetyl-alpha-D-glucosamine (UDP-GlcNAc) biosynthesis via hexosamine pathway. This is Glucosamine-6-phosphate deaminase (Gnpda1) from Aedes aegypti (Yellowfever mosquito).